The primary structure comprises 599 residues: Proline--tRNA ligase (599 aa).

The protein belongs to the class-II aminoacyl-tRNA synthetase family. ProS type 1 subfamily. Homodimer.

The protein resides in the cytoplasm. It carries out the reaction tRNA(Pro) + L-proline + ATP = L-prolyl-tRNA(Pro) + AMP + diphosphate. In terms of biological role, catalyzes the attachment of proline to tRNA(Pro) in a two-step reaction: proline is first activated by ATP to form Pro-AMP and then transferred to the acceptor end of tRNA(Pro). As ProRS can inadvertently accommodate and process non-cognate amino acids such as alanine and cysteine, to avoid such errors it has two additional distinct editing activities against alanine. One activity is designated as 'pretransfer' editing and involves the tRNA(Pro)-independent hydrolysis of activated Ala-AMP. The other activity is designated 'posttransfer' editing and involves deacylation of mischarged Ala-tRNA(Pro). The misacylated Cys-tRNA(Pro) is not edited by ProRS. The sequence is that of Proline--tRNA ligase from Bifidobacterium animalis subsp. lactis (strain AD011).